We begin with the raw amino-acid sequence, 465 residues long: Argininosuccinate lyase (465 aa).

Belongs to the lyase 1 family. Argininosuccinate lyase subfamily.

It is found in the cytoplasm. The enzyme catalyses 2-(N(omega)-L-arginino)succinate = fumarate + L-arginine. The protein operates within amino-acid biosynthesis; L-arginine biosynthesis; L-arginine from L-ornithine and carbamoyl phosphate: step 3/3. The protein is Argininosuccinate lyase of Deinococcus deserti (strain DSM 17065 / CIP 109153 / LMG 22923 / VCD115).